Reading from the N-terminus, the 360-residue chain is DNA replication and repair protein RecF (360 aa).

Residue 30-37 (GHNGSGKT) coordinates ATP.

It belongs to the RecF family.

It is found in the cytoplasm. In terms of biological role, the RecF protein is involved in DNA metabolism; it is required for DNA replication and normal SOS inducibility. RecF binds preferentially to single-stranded, linear DNA. It also seems to bind ATP. The sequence is that of DNA replication and repair protein RecF from Actinobacillus pleuropneumoniae serotype 5b (strain L20).